We begin with the raw amino-acid sequence, 737 residues long: MTLVKYSTIAFPLRSFRLFIFVKKALYHNEPHSIDPFHDKNWIVKRPKFLNLPKNEHSKLDVFQFNFNKSKSNNVYLRDPLFRDNLDKAMQIIYNEKLSSLDAKQVPIKNLAWLKLRDSIYQQLEDPKQQTKNYVPSISEIIYPSSPGNLISLLINCNKIGNSVWKSILKNGQSNNISTLDKFIHVLQQTFDHMYEQEILPMMTNTDDTDGAHNVDITNPAEWFSEARKIRRHIIMHIGPTNSGKTYRALQKLKSVDRGYYAGPLRLLAREVYDRFQSEKVRCNLLTGEEVIRDLDDKGNPAGLTSGTVEMVPINQKFDVVVLDEIQMMSDADRGWAWTNALLGVVSKEVHLVGEKSVLPLVKSIVKMTGDKLTINEYERLGKLSVEDKPVKDGIKGLRKGDCVVAFSKKKVLDLKLKIEKDTNLKVAVIYGSLPPETRVQQAALFNNGEYDIMVASDAIGMGLNLSIDRVVFTTNMKYNGEELMEMTSSQIKQIGGRAGRFKSKSTSGGVPQGFITSFESKVLKSVRKAIESPIEYLKTAVTWPTDEICAQLMTQFPPGTPTSDLLQTISDELERSSDNLFTLSDLKSKLKVIGLFEHMEDIPFFDKLKLSNAPVKDMPMVTKAFTKFCETIAKRHTRGLLSYRLPFNLLDYNCIPNESYSLEVYESLYNIITLYFWLSNRYPNYFIDMESAKDLKYFCEMIIFEKLDRLKKNPYAHKPFGSTRGQFPSSRGRLRT.

Residues 1–25 (MTLVKYSTIAFPLRSFRLFIFVKKA) constitute a mitochondrion transit peptide. Residues 226–365 (EARKIRRHII…KSVLPLVKSI (140 aa)) enclose the Helicase ATP-binding domain. Residue 239 to 246 (GPTNSGKT) participates in ATP binding. Residues 390–546 (PVKDGIKGLR…YLKTAVTWPT (157 aa)) enclose the Helicase C-terminal domain.

Belongs to the helicase family.

The protein resides in the mitochondrion. It carries out the reaction ATP + H2O = ADP + phosphate + H(+). Its function is as follows. Probable ATP-dependent RNA helicase involved in a variety of mitochondrial post-transcriptional processes and in translation. It is a key control element in nuclear-mitochondrial interactions. This is ATP-dependent RNA helicase SUV3, mitochondrial (SUV3) from Saccharomyces paradoxus (Yeast).